The sequence spans 184 residues: Probable chorismate pyruvate-lyase 1 (184 aa).

The substrate site is built by Arg-70, Leu-108, and Glu-166.

This sequence belongs to the UbiC family.

Its subcellular location is the cytoplasm. It carries out the reaction chorismate = 4-hydroxybenzoate + pyruvate. It participates in cofactor biosynthesis; ubiquinone biosynthesis. Removes the pyruvyl group from chorismate, with concomitant aromatization of the ring, to provide 4-hydroxybenzoate (4HB) for the ubiquinone pathway. The polypeptide is Probable chorismate pyruvate-lyase 1 (Burkholderia pseudomallei (strain 1710b)).